Here is a 442-residue protein sequence, read N- to C-terminus: Magnesium transporter MRS2-1 (442 aa).

The segment at M1–S30 is disordered. Transmembrane regions (helical) follow at residues L378–G398 and W414–F434. Residues G398–N400 carry the Required for magnesium transport activity motif.

It belongs to the CorA metal ion transporter (MIT) (TC 1.A.35.5) family. Expressed in the whole plant except stems.

It is found in the membrane. Magnesium transporter that may mediate the influx of magnesium. The protein is Magnesium transporter MRS2-1 (MRS2-1) of Arabidopsis thaliana (Mouse-ear cress).